Here is a 327-residue protein sequence, read N- to C-terminus: Transaldolase (327 aa).

Lys132 serves as the catalytic Schiff-base intermediate with substrate.

The protein belongs to the transaldolase family. Type 1 subfamily. As to quaternary structure, homodimer.

It is found in the cytoplasm. It carries out the reaction D-sedoheptulose 7-phosphate + D-glyceraldehyde 3-phosphate = D-erythrose 4-phosphate + beta-D-fructose 6-phosphate. It functions in the pathway carbohydrate degradation; pentose phosphate pathway; D-glyceraldehyde 3-phosphate and beta-D-fructose 6-phosphate from D-ribose 5-phosphate and D-xylulose 5-phosphate (non-oxidative stage): step 2/3. Transaldolase is important for the balance of metabolites in the pentose-phosphate pathway. In Chlamydia caviae (strain ATCC VR-813 / DSM 19441 / 03DC25 / GPIC) (Chlamydophila caviae), this protein is Transaldolase.